Consider the following 132-residue polypeptide: Small ribosomal subunit protein uS8 (132 aa).

Belongs to the universal ribosomal protein uS8 family. In terms of assembly, part of the 30S ribosomal subunit. Contacts proteins S5 and S12.

Functionally, one of the primary rRNA binding proteins, it binds directly to 16S rRNA central domain where it helps coordinate assembly of the platform of the 30S subunit. The protein is Small ribosomal subunit protein uS8 of Christiangramia forsetii (strain DSM 17595 / CGMCC 1.15422 / KT0803) (Gramella forsetii).